The primary structure comprises 303 residues: uncharacterized protein (303 aa).

Transmembrane regions (helical) follow at residues 12–32 (GLPI…SGIL), 81–101 (ISSV…VLEF), 117–137 (ALAG…FDVI), 174–194 (CIAM…TCMS), 208–228 (IISG…LDVV), and 265–286 (FFKG…SWAA). 3 Solcar repeats span residues 17-105 (SPMY…FKSK), 111-195 (DRPL…CMSF), and 206-293 (SHII…GKEI).

This sequence belongs to the mitochondrial carrier (TC 2.A.29) family.

The protein resides in the mitochondrion inner membrane. This is an uncharacterized protein from Schizosaccharomyces pombe (strain 972 / ATCC 24843) (Fission yeast).